Consider the following 196-residue polypeptide: Holliday junction branch migration complex subunit RuvA (196 aa).

Residues 1-69 (MIVGLRGTII…EDAHLLFGFC (69 aa)) form a domain I region. Residues 70-148 (EEIEKQTFER…QLLQSQEESI (79 aa)) are domain II. The interval 149-157 (APSNNLKYE) is flexible linker. Residues 157–196 (EASLALQSLGFKRNEIQKVLEHIEALSVSEIVKEALKRLA) form a domain III region.

The protein belongs to the RuvA family. Homotetramer. Forms an RuvA(8)-RuvB(12)-Holliday junction (HJ) complex. HJ DNA is sandwiched between 2 RuvA tetramers; dsDNA enters through RuvA and exits via RuvB. An RuvB hexamer assembles on each DNA strand where it exits the tetramer. Each RuvB hexamer is contacted by two RuvA subunits (via domain III) on 2 adjacent RuvB subunits; this complex drives branch migration. In the full resolvosome a probable DNA-RuvA(4)-RuvB(12)-RuvC(2) complex forms which resolves the HJ.

The protein localises to the cytoplasm. The RuvA-RuvB-RuvC complex processes Holliday junction (HJ) DNA during genetic recombination and DNA repair, while the RuvA-RuvB complex plays an important role in the rescue of blocked DNA replication forks via replication fork reversal (RFR). RuvA specifically binds to HJ cruciform DNA, conferring on it an open structure. The RuvB hexamer acts as an ATP-dependent pump, pulling dsDNA into and through the RuvAB complex. HJ branch migration allows RuvC to scan DNA until it finds its consensus sequence, where it cleaves and resolves the cruciform DNA. This chain is Holliday junction branch migration complex subunit RuvA, found in Helicobacter hepaticus (strain ATCC 51449 / 3B1).